The primary structure comprises 149 residues: Calmodulin (149 aa).

EF-hand domains follow at residues 8-43, 44-79, 81-116, and 117-149; these read EQIA…LGQN, PTEA…KMKD, DSEE…LGEK, and LTDE…MMSK. Residues aspartate 21, aspartate 23, aspartate 25, threonine 27, glutamate 32, aspartate 57, aspartate 59, asparagine 61, threonine 63, glutamate 68, aspartate 94, aspartate 96, asparagine 98, glutamate 105, aspartate 130, aspartate 132, aspartate 134, glutamine 136, and glutamate 141 each coordinate Ca(2+).

The protein belongs to the calmodulin family.

Its function is as follows. Calmodulin mediates the control of a large number of enzymes, ion channels and other proteins by Ca(2+). Among the enzymes to be stimulated by the calmodulin-Ca(2+) complex are a number of protein kinases and phosphatases. The polypeptide is Calmodulin (Globisporangium splendens (Leaf rot fungus)).